Reading from the N-terminus, the 114-residue chain is Vacuolar morphogenesis protein 10 (114 aa).

The protein resides in the vacuole membrane. Required for vacuolar fusion. Involved in the early steps of the fusion pathway. The chain is Vacuolar morphogenesis protein 10 (VAM10) from Saccharomyces cerevisiae (strain ATCC 204508 / S288c) (Baker's yeast).